A 1193-amino-acid chain; its full sequence is Cysteine protease ATG4 (1193 aa).

2 disordered regions span residues 23–284 (AAIA…NKMS) and 358–474 (WRPI…KKKS). Over residues 35 to 49 (NLPPPPPPDRIPPPK) the composition is skewed to pro residues. Residues 50–59 (GRSHQQKFKI) show a composition bias toward basic residues. Composition is skewed to basic and acidic residues over residues 60–72 (LRKE…RQPI), 117–127 (ANREEKKEKTS), and 140–153 (FGRD…KPEE). The segment covering 170–185 (SSSTSTDSTTSRSITS) has biased composition (low complexity). Positions 186-205 (AFTRQNSIQSRRSPRTSFGQ) are enriched in polar residues. A compositionally biased stretch (low complexity) spans 227 to 238 (SSTTSHDPSSDP). Composition is skewed to polar residues over residues 253–262 (QGASMSSLSR), 270–284 (GGTS…NKMS), and 389–447 (LSMN…STLS). Residue C570 is the Nucleophile of the active site. Catalysis depends on residues D789 and H791. Disordered regions lie at residues 807 to 869 (HSAK…SKYK), 899 to 924 (VPKS…TSTA), and 1000 to 1171 (QDEM…PARN). Over residues 835–846 (RTPETPRSTTPS) the composition is skewed to low complexity. 2 stretches are compositionally biased toward acidic residues: residues 1004 to 1029 (PSWE…EFEE) and 1070 to 1084 (HLDV…DDNE). Basic and acidic residues-rich tracts occupy residues 1097–1112 (IARH…KREQ) and 1152–1164 (PRYE…EQER).

It belongs to the peptidase C54 family.

Its subcellular location is the cytoplasm. The protein resides in the nucleus. The protein localises to the preautophagosomal structure. It carries out the reaction [protein]-C-terminal L-amino acid-glycyl-phosphatidylethanolamide + H2O = [protein]-C-terminal L-amino acid-glycine + a 1,2-diacyl-sn-glycero-3-phosphoethanolamine. In terms of biological role, cysteine protease that plays a key role in cytoplasm to vacuole transport (Cvt) and autophagy by mediating both proteolytic activation and delipidation of ATG8. Required for selective autophagic degradation of the nucleus (nucleophagy) as well as for mitophagy which contributes to regulate mitochondrial quantity and quality by eliminating the mitochondria to a basal level to fulfill cellular energy requirements and preventing excess ROS production. The protease activity is required for proteolytic activation of ATG8: cleaves the C-terminal amino acid of ATG8 to reveal a C-terminal glycine. ATG8 ubiquitin-like activity requires the exposure of the glycine at the C-terminus for its conjugation to phosphatidylethanolamine (PE) and its insertion to membranes, which is necessary for autophagy. The ATG8-PE conjugate mediates tethering between adjacent membranes and stimulates membrane hemifusion, leading to expansion of the autophagosomal membrane during autophagy. In addition to the protease activity, also catalyzes deconjugation of PE-conjugated forms of ATG8 during macroautophagy: ATG8 delipidation is required to release the protein from membranes, which facilitates multiple events during macroautophagy, and especially for efficient autophagosome biogenesis, the assembly of ATG9-containing tubulovesicular clusters into phagophores/autophagosomes, and for the disassembly of PAS-associated ATG components. ATG8 delipidation by ATG4 also recycles ATG8-PE generated on inappropriate membranes to maintain a reservoir of unlipidated ATG8 that is required for autophagosome formation at the PAS. The sequence is that of Cysteine protease ATG4 (ATG4) from Cryptococcus neoformans var. neoformans serotype D (strain JEC21 / ATCC MYA-565) (Filobasidiella neoformans).